The chain runs to 674 residues: Polyunsaturated fatty acid 5-lipoxygenase (674 aa).

Residues 2-118 form the PLAT domain; the sequence is PSYTVTVATG…EVVLRDGRAK (117 aa). 8 residues coordinate Ca(2+): glycine 17, threonine 18, aspartate 19, asparagine 44, aspartate 45, glutamate 47, aspartate 79, and aspartate 80. The 556-residue stretch at 119 to 674 folds into the Lipoxygenase domain; the sequence is LARDDQIHIL…PDRIPNSVAI (556 aa). Serine 272 bears the Phosphoserine; by MAPKAPK2 mark. Positions 368 and 373 each coordinate Fe cation. Residue serine 524 is modified to Phosphoserine; by PKA. Fe cation is bound by residues histidine 551, asparagine 555, and isoleucine 674.

Belongs to the lipoxygenase family. Homodimer. Interacts with ALOX5AP and LTC4S. Interacts with COTL1, the interaction is required for stability and efficient catalytic activity. Interacts with PIK3R1; this interaction bridges ALOX5 with CD40 after CD40 ligation in B cells and leads to the production of reactive oxygen species (ROS). Interacts (via PLAT domain) with DICER1 (via Dicer dsRNA-binding fold domain); this interaction enhances arachidonate 5-lipoxygenase activity and modifies the miRNA precursor processing activity of DICER1. It depends on Fe cation as a cofactor. In terms of processing, serine phosphorylation by MAPKAPK2 is stimulated by arachidonic acid. Phosphorylation on Ser-524 by PKA has an inhibitory effect. Phosphorylation on Ser-272 prevents export from the nucleus. Phosphorylation at Ser-524 is stimulated by 8-bromo-3',5'-cyclic AMP or prostaglandin E2.

The protein localises to the cytoplasm. It localises to the nucleus matrix. It is found in the nucleus membrane. The protein resides in the perinuclear region. Its subcellular location is the cytosol. The protein localises to the nucleus envelope. It localises to the nucleus intermembrane space. The enzyme catalyses (5Z,8Z,11Z,14Z)-eicosatetraenoate + O2 = leukotriene A4 + H2O. It catalyses the reaction 18-HEPE + O2 = (5S)-hydroperoxy-18-hydroxy-(7E,9E,11Z,14Z,16E)-eicosapentaenoate. The catalysed reaction is (18R)-hydroxy-(5Z,8Z,11Z,14Z,16E)-eicosapentaenoate + O2 = (5S)-hydroperoxy-(18R)-hydroxy-(6E,8Z,11Z,14Z,16E)-eicosapentaenoate. It carries out the reaction (18S)-hydroxy-(5Z,8Z,11Z,14Z,16E)-eicosapentaenoate + O2 = (5S)-hydroperoxy-(18S)-hydroxy-(6E,8Z,11Z,14Z,16E)-eicosapentaenoate. The enzyme catalyses (5S)-hydroperoxy-(18S)-hydroxy-(6E,8Z,11Z,14Z,16E)-eicosapentaenoate = (5S,6S)-epoxy-(18S)-hydroxy-(7E,9E,11Z,14Z,16E)-eicosapentaenoate + H2O. It catalyses the reaction (5S)-hydroperoxy-(18R)-hydroxy-(6E,8Z,11Z,14Z,16E)-eicosapentaenoate = (5S,6S)-epoxy-(18R)-hydroxy-(7E,9E,11Z,14Z,16E)-eicosapentaenoate + H2O. The catalysed reaction is (5S)-hydroperoxy-18-hydroxy-(7E,9E,11Z,14Z,16E)-eicosapentaenoate = (5S,6S)-epoxy-18-hydroxy-(7E,9E,11Z,14Z,16E)-eicosapentaenoate + H2O. It carries out the reaction (5Z,8Z,11Z,14Z)-eicosatetraenoate + O2 = (5S)-hydroperoxy-(6E,8Z,11Z,14Z)-eicosatetraenoate. The enzyme catalyses (15S)-hydroxy-(5Z,8Z,11Z,13E)-eicosatetraenoate + O2 = (5S)-hydroperoxy-(15S)-hydroxy-(6E,8Z,11Z,13E)-eicosatetraenoate. It catalyses the reaction (5S)-hydroperoxy-(6E,8Z,11Z,14Z)-eicosatetraenoate = leukotriene A4 + H2O. The catalysed reaction is (5Z,8Z,11Z,14Z)-eicosatetraenoate + O2 = (8S)-hydroperoxy-(5Z,9E,11Z,14Z)-eicosatetraenoate. It carries out the reaction (5Z,8Z,11Z,14Z)-eicosatetraenoate + O2 = (12S)-hydroperoxy-(5Z,8Z,10E,14Z)-eicosatetraenoate. The enzyme catalyses (5Z,8Z)-eicosadienoate + O2 = (5S)-hydroperoxy-(6E,8Z)-eicosadienoate. It catalyses the reaction (12S)-hydroxy-(5Z,8Z,10E,14Z)-eicosatetraenoate + O2 = (5S)-hydroperoxy-(12S)-hydroxy-(6E,8Z,10E,14Z)-eicosatetraenoate. The catalysed reaction is (5Z,8Z,11Z,14Z,17Z)-eicosapentaenoate + O2 = 5-hydroperoxy-(6E,8Z,11Z,14Z,17Z)-eicosapentaenoate. It carries out the reaction (4Z,7Z,10Z,13Z,16Z,19Z)-docosahexaenoate + O2 = (14S)-hydroperoxy-(4Z,7Z,10Z,12E,16Z,19Z)-docosahexaenoate. The enzyme catalyses (4Z,7Z,10Z,13Z,16Z,19Z)-docosahexaenoate + O2 = (7S)-hydroperoxy-(4Z,8E,10Z,13Z,16Z,19Z)-docosahexaenoate. It catalyses the reaction (4Z,7Z,10Z,13Z,16Z,19Z)-docosahexaenoate + O2 = (17S)-hydroperoxy-(4Z,7Z,10Z,13Z,15E,19Z)-docosahexaenoate. Its pathway is lipid metabolism; leukotriene A4 biosynthesis. Its activity is regulated as follows. Undergoes a sequential loss of the oxygenase and pseudoperoxidase activities which is dependent on the structural characteristics of the substrate for the reaction, on oxygen concentration and on exposure to phospholipids and calcium. 15-HETE and other 15-mono-hydroxyeicosanoids exhibit the highest inhibitory potencies in their capability of suppressing 5-lipoxygenation of arachidonic acid, whereas the other HETEs, (5S,15S)-dihydroxy-(6E,8Z,11Z,13E)-eicosatetraenoic acid (5,15-diHETE) as well as octadecanoids, are modest or poor inhibitors. The formation of (5S)-hydroperoxy-(15S)-hydroxy-(6E,8Z,11Z,13E)-eicosatetraenoate is strongly stimulated by either hydroperoxypolyenoic fatty acids or arachidonic acid. Arachidonate 5-lipoxygenase and leukotriene A4 synthase activities are allosterically increased by ATP. Catalyzes the oxygenation of arachidonate ((5Z,8Z,11Z,14Z)-eicosatetraenoate) to 5-hydroperoxyeicosatetraenoate (5-HPETE) followed by the dehydration to 5,6- epoxyeicosatetraenoate (Leukotriene A4/LTA4), the first two steps in the biosynthesis of leukotrienes, which are potent mediators of inflammation. Also catalyzes the oxygenation of arachidonate into 8-hydroperoxyicosatetraenoate (8-HPETE) and 12-hydroperoxyicosatetraenoate (12-HPETE). Displays lipoxin synthase activity being able to convert (15S)-HETE into a conjugate tetraene. Although arachidonate is the preferred substrate, this enzyme can also metabolize oxidized fatty acids derived from arachidonate such as (15S)-HETE, eicosapentaenoate (EPA) such as (18R)- and (18S)-HEPE or docosahexaenoate (DHA) which lead to the formation of specialized pro-resolving mediators (SPM) lipoxin and resolvins E and D respectively, therefore it participates in anti-inflammatory responses. Oxidation of DHA directly inhibits endothelial cell proliferation and sprouting angiogenesis via peroxisome proliferator-activated receptor gamma (PPARgamma). It does not catalyze the oxygenation of linoleic acid and does not convert (5S)-HETE to lipoxin isomers. In addition to inflammatory processes, it participates in dendritic cell migration, wound healing through an antioxidant mechanism based on heme oxygenase-1 (HO-1) regulation expression, monocyte adhesion to the endothelium via ITGAM expression on monocytes. Moreover, it helps establish an adaptive humoral immunity by regulating primary resting B cells and follicular helper T cells and participates in the CD40-induced production of reactive oxygen species (ROS) after CD40 ligation in B cells through interaction with PIK3R1 that bridges ALOX5 with CD40. May also play a role in glucose homeostasis, regulation of insulin secretion and palmitic acid-induced insulin resistance via AMPK. Can regulate bone mineralization and fat cell differentiation increases in induced pluripotent stem cells. This is Polyunsaturated fatty acid 5-lipoxygenase from Homo sapiens (Human).